The sequence spans 335 residues: Deoxyhypusine hydroxylase (335 aa).

HEAT-like PBS-type repeat units lie at residues 74–100, 107–133, 203–233, 241–267, and 274–301; these read LKHE…VLED, CRHE…LRDD, KRYR…LAEG, FRHE…TLSD, and VRHE…FVND. Residues His-76, Glu-77, His-109, and Glu-110 each coordinate Fe cation. The Fe cation site is built by His-243, Glu-244, His-276, and Glu-277.

It belongs to the deoxyhypusine hydroxylase family. Requires Fe(2+) as cofactor.

It is found in the cytoplasm. Its subcellular location is the nucleus. The catalysed reaction is [eIF5A protein]-deoxyhypusine + AH2 + O2 = [eIF5A protein]-hypusine + A + H2O. It functions in the pathway protein modification; eIF5A hypusination. In terms of biological role, catalyzes the hydroxylation of the N(6)-(4-aminobutyl)-L-lysine intermediate to form hypusine, an essential post-translational modification only found in mature eIF-5A factor. This chain is Deoxyhypusine hydroxylase, found in Coccidioides immitis (strain RS) (Valley fever fungus).